The primary structure comprises 91 residues: Small ribosomal subunit protein bS20 (91 aa).

The segment at 1 to 25 (MANTKSAEKRHRQSLKRRARNVTVR) is disordered. Positions 8–20 (EKRHRQSLKRRAR) are enriched in basic residues.

It belongs to the bacterial ribosomal protein bS20 family.

Its function is as follows. Binds directly to 16S ribosomal RNA. This chain is Small ribosomal subunit protein bS20, found in Myxococcus xanthus (strain DK1622).